The following is a 785-amino-acid chain: Uncoating factor OPG117 (785 aa).

The protein belongs to the orthopoxvirus OPG117 family. As to quaternary structure, homomultimer; hexamer. Interacts with OPG148.

Its subcellular location is the host cytoplasm. Its function is as follows. Multifunctional protein required for genome uncoating and replication. Major viral uncoating protein that is required for the release of the viral genome from incoming viral cores containing the viral DNA genome. Possesses an ATPase activity that is required for hexamerization and uncoating. In Cynomys gunnisoni (Gunnison's prairie dog), this protein is Uncoating factor OPG117 (OPG117).